Consider the following 129-residue polypeptide: Phosphoribosyl-AMP cyclohydrolase (129 aa).

Residue D76 coordinates Mg(2+). Position 77 (C77) interacts with Zn(2+). The Mg(2+) site is built by D78 and D80. Zn(2+) contacts are provided by C97 and C104.

This sequence belongs to the PRA-CH family. In terms of assembly, homodimer. It depends on Mg(2+) as a cofactor. Zn(2+) serves as cofactor.

It localises to the cytoplasm. The catalysed reaction is 1-(5-phospho-beta-D-ribosyl)-5'-AMP + H2O = 1-(5-phospho-beta-D-ribosyl)-5-[(5-phospho-beta-D-ribosylamino)methylideneamino]imidazole-4-carboxamide. The protein operates within amino-acid biosynthesis; L-histidine biosynthesis; L-histidine from 5-phospho-alpha-D-ribose 1-diphosphate: step 3/9. In terms of biological role, catalyzes the hydrolysis of the adenine ring of phosphoribosyl-AMP. This chain is Phosphoribosyl-AMP cyclohydrolase, found in Albidiferax ferrireducens (strain ATCC BAA-621 / DSM 15236 / T118) (Rhodoferax ferrireducens).